Here is a 189-residue protein sequence, read N- to C-terminus: MEDQVILVDEHDNKVGFAGKMAAHQRGALHRAISIFVFDSHSRLMLQRRAAGKYHSGGLWSNTCCSHPRPNEESADAARRRLREEMGVDCELKKAFSFVYRTKFGSGLIEHEFDHVFFGNHDGRPVLNPDEADDWKWVDLTELTVDVRKRPETYSFWLAACLDRVISCRSLNGAGAAAQKIGSTITLMA.

Positions 24 and 30 each coordinate Mn(2+). Positions 28–160 constitute a Nudix hydrolase domain; it reads ALHRAISIFV…PETYSFWLAA (133 aa). C65 is an active-site residue. C65 serves as a coordination point for Mg(2+). H67 contributes to the Mn(2+) binding site. A Mg(2+)-binding site is contributed by E85. Mn(2+) contacts are provided by E110 and E112. Residue E112 is part of the active site.

Belongs to the IPP isomerase type 1 family. Mg(2+) is required as a cofactor. It depends on Mn(2+) as a cofactor.

It localises to the cytoplasm. It catalyses the reaction isopentenyl diphosphate = dimethylallyl diphosphate. It functions in the pathway isoprenoid biosynthesis; dimethylallyl diphosphate biosynthesis; dimethylallyl diphosphate from isopentenyl diphosphate: step 1/1. In terms of biological role, catalyzes the 1,3-allylic rearrangement of the homoallylic substrate isopentenyl (IPP) to its highly electrophilic allylic isomer, dimethylallyl diphosphate (DMAPP). This Aromatoleum aromaticum (strain DSM 19018 / LMG 30748 / EbN1) (Azoarcus sp. (strain EbN1)) protein is Isopentenyl-diphosphate Delta-isomerase 2.